We begin with the raw amino-acid sequence, 180 residues long: Nucleoside triphosphate/diphosphate phosphatase (180 aa).

Arg-26 acts as the Proton donor in catalysis. Mg(2+)-binding residues include Asn-90, Asp-106, Asp-108, Asp-110, Asp-123, and Glu-126.

The protein belongs to the Ntdp family. Requires Mg(2+) as cofactor.

It catalyses the reaction a ribonucleoside 5'-triphosphate + H2O = a ribonucleoside 5'-diphosphate + phosphate + H(+). The catalysed reaction is a ribonucleoside 5'-diphosphate + H2O = a ribonucleoside 5'-phosphate + phosphate + H(+). Has nucleoside phosphatase activity towards nucleoside triphosphates and nucleoside diphosphates. The sequence is that of Nucleoside triphosphate/diphosphate phosphatase from Staphylococcus aureus (strain Mu3 / ATCC 700698).